Here is a 204-residue protein sequence, read N- to C-terminus: Imidazole glycerol phosphate synthase subunit HisH (204 aa).

A Glutamine amidotransferase type-1 domain is found at 1 to 204; sequence MIKIVDYGLG…MTLLKNFSEI (204 aa). C80 acts as the Nucleophile in catalysis. Active-site residues include H186 and E188.

As to quaternary structure, heterodimer of HisH and HisF.

The protein resides in the cytoplasm. It carries out the reaction 5-[(5-phospho-1-deoxy-D-ribulos-1-ylimino)methylamino]-1-(5-phospho-beta-D-ribosyl)imidazole-4-carboxamide + L-glutamine = D-erythro-1-(imidazol-4-yl)glycerol 3-phosphate + 5-amino-1-(5-phospho-beta-D-ribosyl)imidazole-4-carboxamide + L-glutamate + H(+). The catalysed reaction is L-glutamine + H2O = L-glutamate + NH4(+). It functions in the pathway amino-acid biosynthesis; L-histidine biosynthesis; L-histidine from 5-phospho-alpha-D-ribose 1-diphosphate: step 5/9. Its function is as follows. IGPS catalyzes the conversion of PRFAR and glutamine to IGP, AICAR and glutamate. The HisH subunit catalyzes the hydrolysis of glutamine to glutamate and ammonia as part of the synthesis of IGP and AICAR. The resulting ammonia molecule is channeled to the active site of HisF. The chain is Imidazole glycerol phosphate synthase subunit HisH from Bdellovibrio bacteriovorus (strain ATCC 15356 / DSM 50701 / NCIMB 9529 / HD100).